We begin with the raw amino-acid sequence, 237 residues long: Trypsin-1 (237 aa).

Residues 1–237 (IVGGTDAVLG…HVDWIKANAV (237 aa)) enclose the Peptidase S1 domain. The cysteines at positions 30 and 46 are disulfide-linked. Catalysis depends on His-45, which acts as the Charge relay system. 3 residues coordinate Ca(2+): Glu-64, Val-69, and Glu-74. Asp-96 acts as the Charge relay system in catalysis. Cystine bridges form between Cys-159-Cys-174 and Cys-185-Cys-213. Ser-189 serves as the catalytic Charge relay system.

It belongs to the peptidase S1 family. The cofactor is Ca(2+).

It localises to the secreted. It is found in the extracellular space. It carries out the reaction Preferential cleavage: Arg-|-Xaa, Lys-|-Xaa.. The chain is Trypsin-1 from Astacus astacus (Noble crayfish).